The following is a 270-amino-acid chain: 3-methyl-2-oxobutanoate hydroxymethyltransferase (270 aa).

Mg(2+) contacts are provided by Asp-50 and Asp-89. 3-methyl-2-oxobutanoate-binding positions include 50–51 (DS), Asp-89, and Lys-118. Residue Glu-120 coordinates Mg(2+). Glu-187 (proton acceptor) is an active-site residue.

Belongs to the PanB family. Homodecamer; pentamer of dimers. It depends on Mg(2+) as a cofactor.

The protein localises to the cytoplasm. The catalysed reaction is 3-methyl-2-oxobutanoate + (6R)-5,10-methylene-5,6,7,8-tetrahydrofolate + H2O = 2-dehydropantoate + (6S)-5,6,7,8-tetrahydrofolate. Its pathway is cofactor biosynthesis; (R)-pantothenate biosynthesis; (R)-pantoate from 3-methyl-2-oxobutanoate: step 1/2. In terms of biological role, catalyzes the reversible reaction in which hydroxymethyl group from 5,10-methylenetetrahydrofolate is transferred onto alpha-ketoisovalerate to form ketopantoate. This chain is 3-methyl-2-oxobutanoate hydroxymethyltransferase, found in Helicobacter pylori (strain Shi470).